We begin with the raw amino-acid sequence, 434 residues long: Trigger factor (434 aa).

The PPIase FKBP-type domain maps to 160-245 (GDKVKMNFVG…LTEVLAANLP (86 aa)).

Belongs to the FKBP-type PPIase family. Tig subfamily.

It is found in the cytoplasm. It carries out the reaction [protein]-peptidylproline (omega=180) = [protein]-peptidylproline (omega=0). Its function is as follows. Involved in protein export. Acts as a chaperone by maintaining the newly synthesized protein in an open conformation. Functions as a peptidyl-prolyl cis-trans isomerase. In Shewanella sp. (strain MR-4), this protein is Trigger factor.